Reading from the N-terminus, the 352-residue chain is Homocitrate synthase, omega subunit (352 aa).

It belongs to the alpha-IPM synthase/homocitrate synthase family. In terms of assembly, heterodimer of an alpha and an omega chain.

The enzyme catalyses acetyl-CoA + 2-oxoglutarate + H2O = (2R)-homocitrate + CoA + H(+). In terms of biological role, this protein is a Fe-Mo-cofactor biosynthetic component. The protein is Homocitrate synthase, omega subunit (nifV-OMEGA) of Clostridium pasteurianum.